The sequence spans 364 residues: DNA replication and repair protein RecF (364 aa).

Glycine 30–threonine 37 provides a ligand contact to ATP.

It belongs to the RecF family.

Its subcellular location is the cytoplasm. Its function is as follows. The RecF protein is involved in DNA metabolism; it is required for DNA replication and normal SOS inducibility. RecF binds preferentially to single-stranded, linear DNA. It also seems to bind ATP. This is DNA replication and repair protein RecF from Geotalea uraniireducens (strain Rf4) (Geobacter uraniireducens).